A 235-amino-acid chain; its full sequence is Pyridoxine 5'-phosphate synthase (235 aa).

Asparagine 6 is a binding site for 3-amino-2-oxopropyl phosphate. 8-9 (DH) is a 1-deoxy-D-xylulose 5-phosphate binding site. 3-amino-2-oxopropyl phosphate is bound at residue arginine 17. Histidine 42 acts as the Proton acceptor in catalysis. Positions 44 and 49 each coordinate 1-deoxy-D-xylulose 5-phosphate. The Proton acceptor role is filled by glutamate 69. Threonine 99 contacts 1-deoxy-D-xylulose 5-phosphate. The active-site Proton donor is histidine 189. Residues glycine 190 and 211–212 (GH) each bind 3-amino-2-oxopropyl phosphate.

The protein belongs to the PNP synthase family. In terms of assembly, homooctamer; tetramer of dimers.

Its subcellular location is the cytoplasm. It catalyses the reaction 3-amino-2-oxopropyl phosphate + 1-deoxy-D-xylulose 5-phosphate = pyridoxine 5'-phosphate + phosphate + 2 H2O + H(+). It participates in cofactor biosynthesis; pyridoxine 5'-phosphate biosynthesis; pyridoxine 5'-phosphate from D-erythrose 4-phosphate: step 5/5. Its function is as follows. Catalyzes the complicated ring closure reaction between the two acyclic compounds 1-deoxy-D-xylulose-5-phosphate (DXP) and 3-amino-2-oxopropyl phosphate (1-amino-acetone-3-phosphate or AAP) to form pyridoxine 5'-phosphate (PNP) and inorganic phosphate. The chain is Pyridoxine 5'-phosphate synthase from Chlorobium luteolum (strain DSM 273 / BCRC 81028 / 2530) (Pelodictyon luteolum).